Reading from the N-terminus, the 203-residue chain is Endo-type membrane-bound lytic murein transglycosylase A (203 aa).

A signal peptide spans 1 to 15 (MKLRWLLILVVFLAG). A lipid anchor (N-palmitoyl cysteine) is attached at C16. C16 is lipidated: S-diacylglycerol cysteine.

It belongs to the transglycosylase Slt family.

The protein resides in the cell outer membrane. The catalysed reaction is Endolytic cleavage of the (1-&gt;4)-beta-glycosidic linkage between N-acetylmuramic acid (MurNAc) and N-acetylglucosamine (GlcNAc) residues in peptidoglycan with concomitant formation of a 1,6-anhydrobond in the MurNAc residue.. Functionally, murein-degrading enzyme. May play a role in recycling of muropeptides during cell elongation and/or cell division. Preferentially cleaves at a distance of more than two disaccharide units from the ends of the glycan chain. The sequence is that of Endo-type membrane-bound lytic murein transglycosylase A from Klebsiella pneumoniae subsp. pneumoniae (strain ATCC 700721 / MGH 78578).